A 240-amino-acid chain; its full sequence is CD302 antigen (240 aa).

Residues 40–160 enclose the C-type lectin domain; that stretch reads FQDSCYIFLQ…CEVSSVEGTL (121 aa). An N-linked (GlcNAc...) asparagine glycan is attached at asparagine 117. An intrachain disulfide couples cysteine 136 to cysteine 151. The chain crosses the membrane as a helical span at residues 177 to 197; sequence ILISALVIASTVILTVLGAVI. Topologically, residues 198-240 are cytoplasmic; it reads WFLYKRNLDSGFTTVFSTAPQSPFNDDCVLVVAEENEYAVQFD.

It localises to the membrane. It is found in the cell projection. The protein localises to the filopodium. Its subcellular location is the cytoplasm. The protein resides in the cell cortex. Potential multifunctional C-type lectin receptor that may play roles in endocytosis and phagocytosis as well as in cell adhesion and migration. The polypeptide is CD302 antigen (Sus scrofa (Pig)).